Consider the following 284-residue polypeptide: Isopentenyl-diphosphate delta-isomerase (284 aa).

K77 provides a ligand contact to substrate. 2 residues coordinate Mg(2+): H81 and H92. The 167-residue stretch at 90–256 folds into the Nudix hydrolase domain; sequence LLHRAFSVFL…SLVFTPWFKL (167 aa). Positions 111 and 115 each coordinate substrate. The active site involves C127. S128 lines the substrate pocket. Positions 128–172 match the Nudix box motif; it reads SHPLCVPSELGVDSSLEGSKDVNNLTNAVKGAKVAAQRKLEHELG. Residues E204 and E206 each contribute to the Mg(2+) site. Residue E206 is part of the active site.

Belongs to the IPP isomerase type 1 family. The cofactor is Mg(2+).

It is found in the cytoplasm. It catalyses the reaction isopentenyl diphosphate = dimethylallyl diphosphate. Its pathway is isoprenoid biosynthesis; dimethylallyl diphosphate biosynthesis; dimethylallyl diphosphate from isopentenyl diphosphate: step 1/1. In terms of biological role, isopentenyl-diphosphate delta-isomerase; part of the second module of ergosterol biosynthesis pathway that includes the middle steps of the pathway. IDI1 catalyzes the 1,3-allylic rearrangement of isopentenyl (IPP) to its highly electrophilic allylic isomer, dimethylallyl diphosphate (DMAPP). The second module is carried out in the vacuole and involves the formation of farnesyl diphosphate, which is also an important intermediate in the biosynthesis of ubiquinone, dolichol, heme and prenylated proteins. Activity by the mevalonate kinase ERG12 first converts mevalonate into 5-phosphomevalonate. 5-phosphomevalonate is then further converted to 5-diphosphomevalonate by the phosphomevalonate kinase ERG8. The diphosphomevalonate decarboxylase MVD then produces isopentenyl diphosphate. The isopentenyl-diphosphate delta-isomerase IDI1 then catalyzes the 1,3-allylic rearrangement of the homoallylic substrate isopentenyl (IPP) to its highly electrophilic allylic isomer, dimethylallyl diphosphate (DMAPP). Finally the farnesyl diphosphate synthase ERG20 catalyzes the sequential condensation of isopentenyl pyrophosphate with dimethylallyl pyrophosphate, and then with the resultant geranylpyrophosphate to the ultimate product farnesyl pyrophosphate. This Candida albicans (strain SC5314 / ATCC MYA-2876) (Yeast) protein is Isopentenyl-diphosphate delta-isomerase.